Here is a 377-residue protein sequence, read N- to C-terminus: Trans-enoyl reductase FMN2 (377 aa).

Residues 7-370 (NASGGYCLNS…DGVIRGKKLV (364 aa)) enclose the Enoyl reductase (ER) domain. The interval 143-173 (LSDMTGNGRSNGYTNGHTNGHTNGHSKGEEE) is disordered. Over residues 144-155 (SDMTGNGRSNGY) the composition is skewed to polar residues. Over residues 156-167 (TNGHTNGHTNGH) the composition is skewed to low complexity. Residues 186-189 (ASAS), 209-212 (SPAN), tyrosine 227, and 274-275 (LD) each bind NADP(+).

The protein belongs to the zinc-containing alcohol dehydrogenase family.

The protein operates within secondary metabolite biosynthesis. Functionally, trans-enoyl reductase; part of the gene cluster that mediates the biosynthesis of fusamarins, isocoumarin derivatives that show moderate cytotoxicity with IC(50) values between 1 and 50 uM. The polyketide synthase FMN1 probably synthesizes two different polyketides, a tetra- and a pentaketide, containinga varying number of double bonds depending on the selective actions of the trans-enoyl reductase FMN2. Chain fusion will presumably be mediated by the KS domain before finally offloading is catalyzed by the alpha/beta hydrolase fold enzyme FMN3. This Fusarium mangiferae (Mango malformation disease fungus) protein is Trans-enoyl reductase FMN2.